A 235-amino-acid polypeptide reads, in one-letter code: Phosphoribosylaminoimidazole-succinocarboxamide synthase (235 aa).

The protein belongs to the SAICAR synthetase family.

It carries out the reaction 5-amino-1-(5-phospho-D-ribosyl)imidazole-4-carboxylate + L-aspartate + ATP = (2S)-2-[5-amino-1-(5-phospho-beta-D-ribosyl)imidazole-4-carboxamido]succinate + ADP + phosphate + 2 H(+). Its pathway is purine metabolism; IMP biosynthesis via de novo pathway; 5-amino-1-(5-phospho-D-ribosyl)imidazole-4-carboxamide from 5-amino-1-(5-phospho-D-ribosyl)imidazole-4-carboxylate: step 1/2. This chain is Phosphoribosylaminoimidazole-succinocarboxamide synthase, found in Clostridium kluyveri (strain NBRC 12016).